The following is an 895-amino-acid chain: Serine/threonine-protein kinase-like protein ACR4 (895 aa).

The signal sequence occupies residues 1 to 29 (MRMFETRAREWILLVKLVLFTSIWQLASA). Residues 30-434 (LGSMSSIAIS…FWSLQLPIAT (405 aa)) lie on the Extracellular side of the membrane. Tandem repeats lie at residues 38 to 73 (ISYG…GTPG), 77 to 112 (FIGL…GVPQ), 130 to 167 (LCGL…VFDK), 169 to 202 (LHSL…QVIS), 210 to 245 (FQKI…EEVT), 262 to 296 (LLAV…TPAP), and 301 to 339 (FYDL…AVSP). The 7 X 36 AA repeats stretch occupies residues 38 to 339 (ISYGEGGSVF…PASIPLAVSP (302 aa)). N-linked (GlcNAc...) asparagine glycans are attached at residues Asn-158 and Asn-196. A glycan (N-linked (GlcNAc...) asparagine) is linked at Asn-290. One copy of the TNFR-Cys repeat lies at 346–395 (PCPPGTHELSNQENSPCKFTGSHICLPCSTSCPPGMYQKSVCTERSDQVC). Disulfide bonds link Cys-347-Cys-370, Cys-373-Cys-387, and Cys-377-Cys-395. Residues Asn-398 and Asn-410 are each glycosylated (N-linked (GlcNAc...) asparagine). Residues 435-455 (AEIGFALFLVAVVSITAALYI) form a helical membrane-spanning segment. Over 456–895 (RYRLRNCRCS…GQSLFLHHNF (440 aa)) the chain is Cytoplasmic. The residue at position 475 (Ser-475) is a Phosphoserine. Residues 512 to 789 (FKEESIVGKG…KVTTALERAL (278 aa)) form the Protein kinase domain. Residues 518 to 526 (VGKGSFSCV) and Lys-540 each bind ATP. Asp-641 (proton acceptor) is an active-site residue. Residues 818 to 895 (SWRIGSKRSG…GQSLFLHHNF (78 aa)) form a disordered region. Over residues 865 to 877 (EGRKQQEALRSLE) the composition is skewed to basic and acidic residues.

Belongs to the protein kinase superfamily. Ser/Thr protein kinase family. Homodimer. Interacts with PP2A3. Autophosphorylated and phosphorylated by ALE2. Expressed in seedlings, floral buds, siliques, leaves, shoot apical meristems (SAM), and, to a lower extent, in roots.

It is found in the cell membrane. The protein resides in the endosome. It localises to the multivesicular body membrane. It catalyses the reaction L-seryl-[protein] + ATP = O-phospho-L-seryl-[protein] + ADP + H(+). The catalysed reaction is L-threonyl-[protein] + ATP = O-phospho-L-threonyl-[protein] + ADP + H(+). In terms of biological role, controls formative cell division in meristems, including root tips and lateral root initiation zones of the pericycle, in response to CLE40 signal. Acts with CLE40p peptide as a ligand-receptor pair in a signal transduction pathway, coordinating movement of the root tip and organization of cell divisions in the root meristem. Required during embryogenesis and development, probably for the differentiation of protoderm and epidermal cells. Involved in the regulation of cellular organization during the development of sepal margins and ovule integument outgrowth and promotes giant cell formation. Can phosphorylate ALE2. This is Serine/threonine-protein kinase-like protein ACR4 from Arabidopsis thaliana (Mouse-ear cress).